The primary structure comprises 29 residues: U1-pseudomyrmecitoxin-Pt1 subunit SS1 (29 aa).

It belongs to the myrmexin family. Heterodimer composed of subunit SS1 and subunit LS1 (U1-PSDTX-Pt1b), and heterodimer composed of subunit SS1 and LS2 (U1-PSDTX-Pt1a); disulfide-linked. Expressed by the venom gland.

The protein resides in the secreted. This heterodimer may have anti-inflammatory properties, since the myrmexin complex (composed of 6 SS-LS heterodimers) inhibits carrageenin-induced edema in a dose-dependent manner (after subcutaneous injection into rats). This chain is U1-pseudomyrmecitoxin-Pt1 subunit SS1, found in Pseudomyrmex triplarinus (Ant).